Here is a 1328-residue protein sequence, read N- to C-terminus: MSGVKYEVAKFNGDNGFSTWQRRMRDLLIQQGLHKVLDVDSKKPDTMKAEDWADLDERAASAIRLHLSDDVVNNIIDEDTARGIWTRLESLYMSKTLTNKLYLKKQLYALHMSEGTNFLSHLNVFNGLITQLANLGVKIEEEDKAILLLNSLPSSYDNLATTILHGKTTIELKDVTSALLLNEKMRKKPENQGQALITEGRGRSYQRSSNNYGRSGARGKSKNRSKSRVRNCYNCNQPGHFKRDCPNPRKGKGETSGQKNDDNTAAMVQNNDNVVLFINEEEECMHLSGPESEWVVDTAASHHATPVRDLFCRYVAGDFGTVKMGNTSYSKIAGIGDICIKTNVGCTLVLKDVRHVPDLRMNLISGIALDRDGYESYFANQKWRLTKGSLVIAKGVARGTLYRTNAEICQGELNAAQDEISVDLWHKRMGHMSEKGLQILAKKSLISYAKGTTVKPCDYCLFGKQHRVSFQTSSERKLNILDLVYSDVCGPMEIESMGGNKYFVTFIDDASRKLWVYILKTKDQVFQVFQKFHALVERETGRKLKRLRSDNGGEYTSREFEEYCSSHGIRHEKTVPGTPQHNGVAERMNRTIVEKVRSMLRMAKLPKSFWGEAVQTACYLINRSPSVPLAFEIPERVWTNKEVSYSHLKVFGCRAFAHVPKEQRTKLDDKSIPCIFIGYGDEEFGYRLWDPVKKKVIRSRDVVFRESEVRTAADMSEKVKNGIIPNFVTIPSTSNNPTSAESTTDEVSEQGEQPGEVIEQGEQLDEGVEEVEHPTQGEEQHQPLRRSERPRVESRRYPSTEYVLISDDREPESLKEVLSHPEKNQLMKAMQEEMESLQKNGTYKLVELPKGKRPLKCKWVFKLKKDGDCKLVRYKARLVVKGFEQKKGIDFDEIFSPVVKMTSIRTILSLAASLDLEVEQLDVKTAFLHGDLEEEIYMEQPEGFEVAGKKHMVCKLNKSLYGLKQAPRQWYMKFDSFMKSQTYLKTYSDPCVYFKRFSENNFIILLLYVDDMLIVGKDKGLIAKLKGDLSKSFDMKDLGPAQQILGMKIVRERTSRKLWLSQEKYIERVLERFNMKNAKPVSTPLAGHLKLSKKMCPTTVEEKGNMAKVPYSSAVGSLMYAMVCTRPDIAHAVGVVSRFLENPGKEHWEAVKWILRYLRGTTGDCLCFGGSDPILKGYTDADMAGDIDNRKSSTGYLFTFSGGAISWQSKLQKCVALSTTEAEYIAATETGKEMIWLKRFLQELGLHQKEYVVYCDSQSAIDLSKNSMYHARTKHIDVRYHWIREMVDDESLKVLKISTNENPADMLTKVVPRNKFELCKELVGMHSN.

Residues 189-265 (PENQGQALIT…SGQKNDDNTA (77 aa)) form a disordered region. Positions 217–229 (ARGKSKNRSKSRV) are enriched in basic residues. The CCHC-type zinc finger occupies 230-247 (RNCYNCNQPGHFKRDCPN). Basic and acidic residues predominate over residues 241–253 (FKRDCPNPRKGKG). The active-site For protease activity is Asp-297. Residues 473–642 (SSERKLNILD…IPERVWTNKE (170 aa)) enclose the Integrase catalytic domain. The span at 729-742 (TIPSTSNNPTSAES) shows a compositional bias: polar residues. The segment at 729–800 (TIPSTSNNPT…RVESRRYPST (72 aa)) is disordered. The segment covering 770–798 (EVEHPTQGEEQHQPLRRSERPRVESRRYP) has biased composition (basic and acidic residues).

It carries out the reaction DNA(n) + a 2'-deoxyribonucleoside 5'-triphosphate = DNA(n+1) + diphosphate. The protein is Retrovirus-related Pol polyprotein from transposon TNT 1-94 of Nicotiana tabacum (Common tobacco).